An 80-amino-acid polypeptide reads, in one-letter code: SPI-1 type 3 secretion system needle filament protein (80 aa).

It belongs to the SctF family. In terms of assembly, the core secretion machinery of the T3SS is composed of approximately 20 different proteins, including cytoplasmic components, a base, an export apparatus and a needle. This subunit polymerizes and forms the helical needle filament. Interacts with the needle tip protein SipD/SctA. Interacts with the needle adapter protein PrgJ/SctI, the secretin InvG/SctC and the minor export apparatus protein SpaP/SctR. In vitro, the needle protomer refolds spontaneously to extend the needle from the distal end.

Its subcellular location is the secreted. The protein localises to the cell surface. Binding of bile salts, including deoxycholate, to the PrgI:SipD interface may inhibit the T3SS function. Its function is as follows. Component of the type III secretion system (T3SS), also called injectisome, which is used to inject bacterial effector proteins into eukaryotic host cells. PrgI/SctF1 forms the external needle filament that protrudes from the bacterial surface. Is probably involved in the transduction of an activating signal, thought to be mediated by the distal tip of the needle filament, to the secretion machine. Required for invasion of epithelial cells. Required for the secretion of the effector protein SptP. During infection, can induce innate immune responses. The needle proteins interact with host TLR2 or TLR4, and induce signaling by NF-kappa-B and/or AP-1. This activation is MyD88 dependent and results in increased expression of cytokines, including TNF-alpha, IL-6 and IL-8. The chain is SPI-1 type 3 secretion system needle filament protein from Salmonella typhimurium (strain LT2 / SGSC1412 / ATCC 700720).